The sequence spans 315 residues: Protein SHORT INTERNODES 1 (315 aa).

Residues 1–10 (MAGFPLGGGS) show a composition bias toward gly residues. Disordered regions lie at residues 1 to 24 (MAGFPLGGGSHSRDNPAPPVPPVH) and 64 to 92 (PPAPSLAGASSSSSSRGMRSSGGGGGGGG). Residues 70–82 (AGASSSSSSRGMR) are compositionally biased toward low complexity. The segment covering 83-92 (SSGGGGGGGG) has biased composition (gly residues). Zn(2+) is bound by residues cysteine 97, cysteine 100, cysteine 108, cysteine 113, cysteine 117, and cysteine 124. Positions 97-124 (CQDCGNQAKKDCTHMRCRTCCKSRGFAC) form a DNA-binding region, zn(2)-C6 fungal-type; degenerate. Composition is skewed to low complexity over residues 143 to 156 (QQLAALAASAAATA) and 172 to 182 (RPSATTPTTSS). Residues 143-186 (QQLAALAASAAATAGGAGPSRDPTKRPRARPSATTPTTSSGDQQ) are disordered. Residues 227 to 230 (IGGH) carry the Required for homo- and heterodimerization motif.

Belongs to the SHI protein family. Forms homodimers (via C-terminus). Interacts with SPL14/IPA1 (via C-terminus). In terms of tissue distribution, predominantly expressed in axillary buds and young panicles.

It localises to the nucleus. Functionally, regulates tillering and panicle branching by modulating SPL14/IPA1 transcriptional activity on the downstream TB1 and DEP1 target genes. Binds directly to the 5'-T/GCTCTAC-3' DNA motif found in the promoter regions of both TB1 and DEP1. Represses the DNA binding activity of SPL14/IPA1 toward the promoters of both TB1 and DEP1. Exhibits weak transcriptional activation activity in yeast cells. In Oryza sativa subsp. japonica (Rice), this protein is Protein SHORT INTERNODES 1.